Consider the following 292-residue polypeptide: Elongation factor Ts (292 aa).

Residues 79–82 (TDFV) form an involved in Mg(2+) ion dislocation from EF-Tu region.

It belongs to the EF-Ts family.

It is found in the cytoplasm. In terms of biological role, associates with the EF-Tu.GDP complex and induces the exchange of GDP to GTP. It remains bound to the aminoacyl-tRNA.EF-Tu.GTP complex up to the GTP hydrolysis stage on the ribosome. The chain is Elongation factor Ts from Xanthomonas campestris pv. campestris (strain ATCC 33913 / DSM 3586 / NCPPB 528 / LMG 568 / P 25).